The primary structure comprises 117 residues: Large ribosomal subunit protein uL22 (117 aa).

This sequence belongs to the universal ribosomal protein uL22 family. Part of the 50S ribosomal subunit.

This protein binds specifically to 23S rRNA; its binding is stimulated by other ribosomal proteins, e.g. L4, L17, and L20. It is important during the early stages of 50S assembly. It makes multiple contacts with different domains of the 23S rRNA in the assembled 50S subunit and ribosome. Its function is as follows. The globular domain of the protein is located near the polypeptide exit tunnel on the outside of the subunit, while an extended beta-hairpin is found that lines the wall of the exit tunnel in the center of the 70S ribosome. The protein is Large ribosomal subunit protein uL22 of Synechococcus elongatus (strain ATCC 33912 / PCC 7942 / FACHB-805) (Anacystis nidulans R2).